A 270-amino-acid polypeptide reads, in one-letter code: Undecaprenyl-diphosphatase 1 (270 aa).

7 helical membrane-spanning segments follow: residues 5 to 25 (YYILKYLILGLFQGLTEPIPI), 42 to 62 (IEGFSFELLVNSASLLAVLLI), 89 to 109 (FFFIIYLVIATIPAGVIGVLF), 117 to 137 (LKGVKMVGISLLITAVGLWII), 192 to 212 (FSFLLYIPVSLGGLLLSITDI), 220 to 240 (TLFVPYIVAFIATFIMTYISL), and 250 to 270 (GNLKYFSFYCIIVGVLTLIFL).

Belongs to the UppP family.

The protein resides in the cell membrane. It carries out the reaction di-trans,octa-cis-undecaprenyl diphosphate + H2O = di-trans,octa-cis-undecaprenyl phosphate + phosphate + H(+). Functionally, catalyzes the dephosphorylation of undecaprenyl diphosphate (UPP). Confers resistance to bacitracin. The protein is Undecaprenyl-diphosphatase 1 of Bacillus cereus (strain ATCC 10987 / NRS 248).